We begin with the raw amino-acid sequence, 237 residues long: Ribose-5-phosphate isomerase A (237 aa).

Residues 33–36 (TGST), 90–93 (DGAD), and 103–106 (KGGG) contribute to the substrate site. The active-site Proton acceptor is the Glu112. Lys130 is a substrate binding site.

Belongs to the ribose 5-phosphate isomerase family. Homodimer.

The enzyme catalyses aldehydo-D-ribose 5-phosphate = D-ribulose 5-phosphate. It functions in the pathway carbohydrate degradation; pentose phosphate pathway; D-ribose 5-phosphate from D-ribulose 5-phosphate (non-oxidative stage): step 1/1. Catalyzes the reversible conversion of ribose-5-phosphate to ribulose 5-phosphate. The sequence is that of Ribose-5-phosphate isomerase A from Gloeothece citriformis (strain PCC 7424) (Cyanothece sp. (strain PCC 7424)).